The following is a 350-amino-acid chain: Phosphoribosylformylglycinamidine cyclo-ligase (350 aa).

It belongs to the AIR synthase family.

The protein resides in the cytoplasm. It catalyses the reaction 2-formamido-N(1)-(5-O-phospho-beta-D-ribosyl)acetamidine + ATP = 5-amino-1-(5-phospho-beta-D-ribosyl)imidazole + ADP + phosphate + H(+). Its pathway is purine metabolism; IMP biosynthesis via de novo pathway; 5-amino-1-(5-phospho-D-ribosyl)imidazole from N(2)-formyl-N(1)-(5-phospho-D-ribosyl)glycinamide: step 2/2. This Cupriavidus pinatubonensis (strain JMP 134 / LMG 1197) (Cupriavidus necator (strain JMP 134)) protein is Phosphoribosylformylglycinamidine cyclo-ligase.